Reading from the N-terminus, the 247-residue chain is OCIA domain-containing protein 1 (247 aa).

One can recognise an OCIA domain in the interval 1 to 112; sequence MNGRADFREP…KKLENSPLGE (112 aa). Ser108 and Ser116 each carry phosphoserine. Residues 116 to 247 are disordered; that stretch reads SGELRRSLPP…VNKYGDTWDE (132 aa). Composition is skewed to polar residues over residues 136–146 and 168–177; these read SNVSGQSSFGT and ASMNESTPTG. 2 stretches are compositionally biased toward basic and acidic residues: residues 192-210 and 218-240; these read DSPK…KNRE and HKTD…KVNK. Residues Ser193 and Ser198 each carry the phosphoserine modification.

Belongs to the OCIAD1 family. Interacts with OCIAD2. Interacts with STAT3.

Its subcellular location is the endosome. Its function is as follows. Maintains stem cell potency. Increases STAT3 phosphorylation and controls ERK phosphorylation. May act as a scaffold, increasing STAT3 recruitment onto endosomes. The protein is OCIA domain-containing protein 1 of Rattus norvegicus (Rat).